Consider the following 310-residue polypeptide: Methionyl-tRNA formyltransferase (310 aa).

110–113 contacts (6S)-5,6,7,8-tetrahydrofolate; it reads SLLP.

Belongs to the Fmt family.

The enzyme catalyses L-methionyl-tRNA(fMet) + (6R)-10-formyltetrahydrofolate = N-formyl-L-methionyl-tRNA(fMet) + (6S)-5,6,7,8-tetrahydrofolate + H(+). Attaches a formyl group to the free amino group of methionyl-tRNA(fMet). The formyl group appears to play a dual role in the initiator identity of N-formylmethionyl-tRNA by promoting its recognition by IF2 and preventing the misappropriation of this tRNA by the elongation apparatus. This chain is Methionyl-tRNA formyltransferase, found in Clostridium acetobutylicum (strain ATCC 824 / DSM 792 / JCM 1419 / IAM 19013 / LMG 5710 / NBRC 13948 / NRRL B-527 / VKM B-1787 / 2291 / W).